Consider the following 216-residue polypeptide: Thioredoxin-like 2, chloroplastic (216 aa).

A chloroplast-targeting transit peptide spans 1–58; sequence MAEALLPLPRRLVVTASTPACSSASSSTSPSPHCLLSRANPRPPRLAAPSPPRHRRLK. Over residues 19-40 the composition is skewed to low complexity; sequence PACSSASSSTSPSPHCLLSRAN. Residues 19–70 form a disordered region; sequence PACSSASSSTSPSPHCLLSRANPRPPRLAAPSPPRHRRLKAHAAVSDKSEQP. The span at 41–51 shows a compositional bias: pro residues; it reads PRPPRLAAPSP. Residues 61 to 188 enclose the Thioredoxin domain; that stretch reads AAVSDKSEQP…LKDAIAVHNT (128 aa). Catalysis depends on nucleophile residues Cys111 and Cys114. Cys111 and Cys114 are disulfide-bonded.

It belongs to the thioredoxin family.

It localises to the plastid. Its subcellular location is the chloroplast. Its function is as follows. Probable thiol-disulfide oxidoreductase that may participate in various redox reactions. The chain is Thioredoxin-like 2, chloroplastic from Oryza sativa subsp. japonica (Rice).